Here is a 418-residue protein sequence, read N- to C-terminus: Glutamyl-tRNA(Gln) amidotransferase subunit D (418 aa).

One can recognise an Asparaginase/glutaminase domain in the interval 74–405; that stretch reads KNISILSTGG…KEAKELMSKN (332 aa). Active-site residues include threonine 84, threonine 160, aspartate 161, and lysine 237.

The protein belongs to the asparaginase 1 family. GatD subfamily. As to quaternary structure, heterodimer of GatD and GatE.

The catalysed reaction is L-glutamyl-tRNA(Gln) + L-glutamine + ATP + H2O = L-glutaminyl-tRNA(Gln) + L-glutamate + ADP + phosphate + H(+). In terms of biological role, allows the formation of correctly charged Gln-tRNA(Gln) through the transamidation of misacylated Glu-tRNA(Gln) in organisms which lack glutaminyl-tRNA synthetase. The reaction takes place in the presence of glutamine and ATP through an activated gamma-phospho-Glu-tRNA(Gln). The GatDE system is specific for glutamate and does not act on aspartate. The chain is Glutamyl-tRNA(Gln) amidotransferase subunit D from Methanococcus maripaludis (strain DSM 14266 / JCM 13030 / NBRC 101832 / S2 / LL).